The sequence spans 360 residues: Galactoside alpha-(1,2)-fucosyltransferase 1 (360 aa).

Over 1–8 (MWAPGHHH) the chain is Cytoplasmic. Residues 9-27 (LCLIFLLTCVFACVFFLLI) traverse the membrane as a helical; Signal-anchor for type II membrane protein segment. The Lumenal segment spans residues 28–360 (HQNLFHSGLD…GINADLSPLQ (333 aa)). 3 N-linked (GlcNAc...) asparagine glycosylation sites follow: Asn-65, Asn-301, and Asn-327.

This sequence belongs to the glycosyltransferase 11 family. As to expression, expressed in brain, intestine and kidney.

The protein resides in the golgi apparatus. Its subcellular location is the golgi stack membrane. The catalysed reaction is a ganglioside GM1 + GDP-beta-L-fucose = a ganglioside Fuc-GM1 + GDP + H(+). It catalyses the reaction a beta-D-galactosyl-(1-&gt;4)-N-acetyl-beta-D-glucosaminyl derivative + GDP-beta-L-fucose = an alpha-L-Fuc-(1-&gt;2)-beta-D-Gal-(1-&gt;4)-beta-D-GlcNAc derivative + GDP + H(+). The enzyme catalyses a ganglioside GA1 + GDP-beta-L-fucose = a ganglioside Fuc-GA1 + GDP + H(+). It carries out the reaction a beta-D-Gal-(1-&gt;3)-beta-D-GlcNAc-(1-&gt;3)-beta-D-Gal-(1-&gt;4)-beta-D-Glc-(1&lt;-&gt;1')-Cer(d18:1(4E)) + GDP-beta-L-fucose = alpha-L-fucosyl-(1-&gt;2)- beta-D-galactosyl-(1-&gt;3)-N-acetyl-beta-D-glucosaminyl-(1-&gt;3)-beta-D-galactosyl-(1-&gt;4)-beta-D-glucosyl-(1&lt;-&gt;1')-N-acylsphing-4-enine + GDP + H(+). The catalysed reaction is a neolactoside nLc4Cer(d18:1(4E)) + GDP-beta-L-fucose = a neolactoside IV(2)-alpha-Fuc-nLc4Cer(d18:1(4E)) + GDP + H(+). It catalyses the reaction beta-D-galactosyl-(1-&gt;3)-N-acetyl-D-galactosamine + GDP-beta-L-fucose = alpha-L-fucosyl-(1-&gt;2)-beta-D-galactosyl-(1-&gt;3)-N-acetyl-D-galactosamine + GDP + H(+). It participates in protein modification; protein glycosylation. In terms of biological role, catalyzes the transfer of L-fucose, from a guanosine diphosphate-beta-L-fucose, to the terminal galactose residue of glycoconjugates through an alpha(1,2) linkage leading to H antigen synthesis that is an intermediate substrate in the synthesis of ABO blood group antigens. H antigen is essential for maturation of the glomerular layer of the main olfactory bulb, in cell migration and early cell-cell contacts during tumor associated angiogenesis. Preferentially fucosylates soluble lactose and to a lesser extent, fucosylates glycolipids gangliosides GA1 and GM1a. This is Galactoside alpha-(1,2)-fucosyltransferase 1 from Bos taurus (Bovine).